The following is a 193-amino-acid chain: Probable molybdenum cofactor guanylyltransferase (193 aa).

GTP is bound by residues 9–11 (TAG), K21, D64, and D93. A Mg(2+)-binding site is contributed by D93.

It belongs to the MobA family. It depends on Mg(2+) as a cofactor.

The protein localises to the cytoplasm. It catalyses the reaction Mo-molybdopterin + GTP + H(+) = Mo-molybdopterin guanine dinucleotide + diphosphate. Functionally, transfers a GMP moiety from GTP to Mo-molybdopterin (Mo-MPT) cofactor (Moco or molybdenum cofactor) to form Mo-molybdopterin guanine dinucleotide (Mo-MGD) cofactor. The sequence is that of Probable molybdenum cofactor guanylyltransferase from Deinococcus radiodurans (strain ATCC 13939 / DSM 20539 / JCM 16871 / CCUG 27074 / LMG 4051 / NBRC 15346 / NCIMB 9279 / VKM B-1422 / R1).